The following is a 272-amino-acid chain: MARLAAFDMDGTLLMPDHRLGDKTLSTLKRLHDRDITLTFATGRHVLEMRHLLGALSLDAFLITGNGTRIHSVEGEVLHRQDLDPDVADLVLHSTWETEASIHVFNDTGWLTGKEIPELLHAHVYSGFRYQLTDLRRIPAHSVTKICFCGDHDDLCRLRIQLNDALGNRAHLTFSAMDCLEVLPVGCNKGSALAVLSDHLGLTLQDCMAFGDAMNDREMLGSVGRGLIMGNAMPQLIAELSHLPVIGHCRNEAVSHFLTHWLDQPNLPYSPE.

The active-site Nucleophile is aspartate 8. Mg(2+) contacts are provided by aspartate 8, aspartate 10, and aspartate 212.

The protein belongs to the HAD-like hydrolase superfamily. Cof family. It depends on Mg(2+) as a cofactor.

It carries out the reaction 4-amino-2-methyl-5-(diphosphooxymethyl)pyrimidine + H2O = 4-amino-2-methyl-5-(phosphooxymethyl)pyrimidine + phosphate + H(+). Functionally, catalyzes the hydrolysis of 4-amino-2-methyl-5-hydroxymethylpyrimidine pyrophosphate (HMP-PP) to 4-amino-2-methyl-5-hydroxymethylpyrimidine phosphate (HMP-P). The protein is HMP-PP phosphatase of Enterobacter sp. (strain 638).